Here is a 189-residue protein sequence, read N- to C-terminus: Putative nucleotidase BC_3386 (189 aa).

This sequence belongs to the 5'(3')-deoxyribonucleotidase family.

The chain is Putative nucleotidase BC_3386 from Bacillus cereus (strain ATCC 14579 / DSM 31 / CCUG 7414 / JCM 2152 / NBRC 15305 / NCIMB 9373 / NCTC 2599 / NRRL B-3711).